Reading from the N-terminus, the 202-residue chain is Oxopyrrolidines biosynthesis cluster protein O (202 aa).

Its function is as follows. Part of the gene cluster that mediates the biosynthesis of oxopyrrolidines, polyketide-amino acid hybrid compounds with feature structures of tetramic acid. Does not seem to play a role in oxopyrrolidines A and B biosynthesis. The sequence is that of Oxopyrrolidines biosynthesis cluster protein O from Penicillium oxalicum (strain 114-2 / CGMCC 5302) (Penicillium decumbens).